The primary structure comprises 317 residues: Eukaryotic translation initiation factor 2 subunit 2 (317 aa).

The tract at residues 1 to 146 (MSATEEENVL…KEKTITTSDG (146 aa)) is disordered. Over residues 79-90 (AIEKLENEGAHD) the composition is skewed to basic and acidic residues. Over residues 109 to 125 (KSSTTTTTSTTTTTTEP) the composition is skewed to low complexity. The C4-type zinc finger occupies 222–246 (HVYNYVFAELGTNGSIDGNQRLVIR).

It belongs to the eIF-2-beta/eIF-5 family. As to quaternary structure, eukaryotic translation initiation factor 2 eIF2 is a heterotrimeric complex composed of an alpha, a beta and a gamma subunit.

Its subcellular location is the cytoplasm. It is found in the cytosol. In terms of biological role, component of the eIF2 complex that functions in the early steps of protein synthesis by forming a ternary complex with GTP and initiator tRNA. This complex binds to a 40S ribosomal subunit, followed by mRNA binding to form a 43S pre-initiation complex (43S PIC). Junction of the 60S ribosomal subunit to form the 80S initiation complex is preceded by hydrolysis of the GTP bound to eIF2 and release of an eIF2-GDP binary complex. In order for eIF2 to recycle and catalyze another round of initiation, the GDP bound to eIF2 must exchange with GTP by way of a reaction catalyzed by eIF2B. In Dictyostelium discoideum (Social amoeba), this protein is Eukaryotic translation initiation factor 2 subunit 2 (eif2s2).